We begin with the raw amino-acid sequence, 214 residues long: MKKLCAIFGGNFDPIHYGHINLAEKLAKDISIKKIILLPNNYPPHRKKTQTSISDKIKMIKLAIHNNPLFEISYLETKKNNIFYTIDTLKKIRKKISHLEPLCFIIGEDNLQTFYLWKNWREILLYSHLLIYPRKHKKQKNNELEKWIHSNTVYDCNLLHKQPCGLIFFSDAPCINISSSRIRKNYFYGKNSHSLLPSIVNNYILLKKLYYTNQ.

Belongs to the NadD family.

The catalysed reaction is nicotinate beta-D-ribonucleotide + ATP + H(+) = deamido-NAD(+) + diphosphate. The protein operates within cofactor biosynthesis; NAD(+) biosynthesis; deamido-NAD(+) from nicotinate D-ribonucleotide: step 1/1. Its function is as follows. Catalyzes the reversible adenylation of nicotinate mononucleotide (NaMN) to nicotinic acid adenine dinucleotide (NaAD). This chain is Probable nicotinate-nucleotide adenylyltransferase, found in Buchnera aphidicola subsp. Acyrthosiphon pisum (strain Tuc7).